The sequence spans 453 residues: Ribulose bisphosphate carboxylase large chain (453 aa).

A propeptide spanning residues 1–2 (MS) is cleaved from the precursor. Proline 3 is subject to N-acetylproline. Lysine 14 carries the N6,N6,N6-trimethyllysine modification. Substrate is bound by residues asparagine 123 and threonine 173. The active-site Proton acceptor is the lysine 175. Lysine 177 is a binding site for substrate. Mg(2+) is bound by residues lysine 201, aspartate 203, and glutamate 204. An N6-carboxylysine modification is found at lysine 201. Catalysis depends on histidine 294, which acts as the Proton acceptor. Substrate is bound by residues arginine 295, histidine 327, and serine 379.

It belongs to the RuBisCO large chain family. Type I subfamily. As to quaternary structure, heterohexadecamer of 8 large chains and 8 small chains; disulfide-linked. The disulfide link is formed within the large subunit homodimers. Mg(2+) serves as cofactor. In terms of processing, the disulfide bond which can form in the large chain dimeric partners within the hexadecamer appears to be associated with oxidative stress and protein turnover.

The protein localises to the plastid. It localises to the chloroplast. The enzyme catalyses 2 (2R)-3-phosphoglycerate + 2 H(+) = D-ribulose 1,5-bisphosphate + CO2 + H2O. It catalyses the reaction D-ribulose 1,5-bisphosphate + O2 = 2-phosphoglycolate + (2R)-3-phosphoglycerate + 2 H(+). In terms of biological role, ruBisCO catalyzes two reactions: the carboxylation of D-ribulose 1,5-bisphosphate, the primary event in carbon dioxide fixation, as well as the oxidative fragmentation of the pentose substrate in the photorespiration process. Both reactions occur simultaneously and in competition at the same active site. The chain is Ribulose bisphosphate carboxylase large chain from Crucianella angustifolia (Narrow-leaved crosswort).